The following is a 545-amino-acid chain: Thermosome subunit (545 aa).

The protein belongs to the TCP-1 chaperonin family. Forms an oligomeric complex of eight-membered rings.

Molecular chaperone; binds unfolded polypeptides in vitro, and has a weak ATPase activity. The polypeptide is Thermosome subunit (ths) (Desulfurococcus sp. (strain SY)).